A 454-amino-acid chain; its full sequence is MTMITPVQAILASNQHFLDRQDVMESNVRSYPRKLPFAYAKAQGCWVTDVEGNEYLDFLAGAGTLALGHNHPILMQAIKDVLDSGLPLHTLDLTTPLKDAFSEELLSFFPKDKYILQFTGPSGADANEAAIKLAKTYTGRGNIIAFSGGFHGMTQGALALTGNLGAKNAVENLMPGVQFMPYPHEYRCPFGIGGEAGAKAVEQYFENFIEDVESGVVKPAAVILEAIQGEGGVVSAPISFLQKVREVTQKHGILMIVDEVQAGFCRSGRMFAFEHAGIEPDIIVMSKAVGGSLPLAVLAIRKEFDAWQPAGHTGTFRGNQLAMATGYASLKIMRDENLAQNAQERGEYLTNALRELSKEYPCIGNVRGRGLMMGIDIVDERQSKDATGAYPRDCELAAAIQKACFKNKLLLERGGRGGNVVRVLCAVNINQSECEEFIKRFKQSVVDALKVVRS.

Lys287 carries the post-translational modification N6-(pyridoxal phosphate)lysine.

It belongs to the class-III pyridoxal-phosphate-dependent aminotransferase family. Requires pyridoxal 5'-phosphate as cofactor.

The enzyme catalyses L-2,4-diaminobutanoate + 2-oxoglutarate = L-aspartate 4-semialdehyde + L-glutamate. Its pathway is amine and polyamine biosynthesis; 1,3-diaminopropane biosynthesis; 1,3-diaminopropane from L-aspartate 4-semialdehyde: step 1/2. This Haemophilus influenzae (strain ATCC 51907 / DSM 11121 / KW20 / Rd) protein is Diaminobutyrate--2-oxoglutarate aminotransferase (dat).